The sequence spans 445 residues: GTPase Der (445 aa).

EngA-type G domains lie at 2–166 and 182–355; these read FRVA…PEYE and IKVA…NQAW. Residues 8–15, 55–59, 118–121, 188–195, 235–239, and 300–303 contribute to the GTP site; these read GIPNVGKS, DTGGY, NKID, GKPNAGKS, and DTAGM. A KH-like domain is found at 356-440; that stretch reads KRVGTGQLNR…PIKLIFRGKE (85 aa).

The protein belongs to the TRAFAC class TrmE-Era-EngA-EngB-Septin-like GTPase superfamily. EngA (Der) GTPase family. In terms of assembly, associates with the 50S ribosomal subunit.

Functionally, GTPase that plays an essential role in the late steps of ribosome biogenesis. The chain is GTPase Der from Sulfurihydrogenibium sp. (strain YO3AOP1).